Here is a 637-residue protein sequence, read N- to C-terminus: Rab11 family-interacting protein 4 (637 aa).

The EF-hand domain maps to 49–84; it reads GQGEEVEKLVKYLDPNDLGRINFKDFCRGVFAMKGC. Residues Asp62, Asn64, Arg68, and Asp73 each coordinate Ca(2+). A necessary for interaction with RAB11A, subcellular location, homo- or heterooligomerization region spans residues 82 to 637; it reads KGCEELLKDV…HNPSILEIKH (556 aa). 2 disordered regions span residues 138–175 and 219–256; these read EEEA…PAEK and YGEG…SAGQ. Positions 280–617 form a coiled coil; it reads KINLLNDLEA…EEINFRLRQY (338 aa). The FIP-RBD domain maps to 574 to 636; that stretch reads EAKNLFAAQT…DHNPSILEIK (63 aa).

Homodimer. Forms a complex with Rab11 (RAB11A or RAB11B) and ARF6. Interacts with RAB11A; the interaction is direct. Forms a heterooligomeric complex with RAB11FIP2, RAB11FIP3 and RAB11FIP5. Interacts with ECPAS. As to quaternary structure, (Microbial infection) Interacts with human cytomegalovirus/HHV-5 protein gM/UL100. Present at high level in testis (at protein level). Weakly expressed in other tissues.

The protein localises to the endosome. Its subcellular location is the cytoplasm. It is found in the cytoskeleton. It localises to the spindle. The protein resides in the microtubule organizing center. The protein localises to the centrosome. Its subcellular location is the recycling endosome membrane. It is found in the cleavage furrow. It localises to the midbody. The protein resides in the cytoplasmic vesicle. Functionally, acts as a regulator of endocytic traffic by participating in membrane delivery. Required for the abscission step in cytokinesis, possibly by acting as an 'address tag' delivering recycling endosome membranes to the cleavage furrow during late cytokinesis. In case of infection by HCMV (human cytomegalovirus), may participate in egress of the virus out of nucleus; this function is independent of ARF6. The polypeptide is Rab11 family-interacting protein 4 (RAB11FIP4) (Homo sapiens (Human)).